Here is a 786-residue protein sequence, read N- to C-terminus: UPF0313 protein SO_0311 (786 aa).

The Radical SAM core domain occupies 371-649 (AYDMIKTSIN…KALLRYHDPA (279 aa)). Residues Cys-385, Cys-389, and Cys-392 each coordinate [4Fe-4S] cluster. 2 disordered regions span residues 669–688 (NSPNHLVPPEGRNERGPKWM) and 698–786 (LTRF…QQAK). Composition is skewed to basic and acidic residues over residues 679–688 (GRNERGPKWM) and 706–717 (FDERKGKGDAKG). Positions 718–731 (KPSASKPKGPKSGA) are enriched in low complexity. The span at 732–741 (NAPQSQQPKT) shows a compositional bias: polar residues.

This sequence belongs to the UPF0313 family. The cofactor is [4Fe-4S] cluster.

This Shewanella oneidensis (strain ATCC 700550 / JCM 31522 / CIP 106686 / LMG 19005 / NCIMB 14063 / MR-1) protein is UPF0313 protein SO_0311.